A 120-amino-acid chain; its full sequence is Adenosylhomocysteinase (120 aa).

Residue Asn-34 coordinates NAD(+).

Belongs to the adenosylhomocysteinase family. The cofactor is NAD(+).

It localises to the cytoplasm. The catalysed reaction is S-adenosyl-L-homocysteine + H2O = L-homocysteine + adenosine. It participates in amino-acid biosynthesis; L-homocysteine biosynthesis; L-homocysteine from S-adenosyl-L-homocysteine: step 1/1. May play a key role in the regulation of the intracellular concentration of adenosylhomocysteine. This chain is Adenosylhomocysteinase (ahcY), found in Streptomyces fradiae (Streptomyces roseoflavus).